The primary structure comprises 58 residues: Small ribosomal subunit protein bS21 (58 aa).

Positions 36–58 (EHYEKPSVKRKKKSEAARRRKYR) are disordered. Over residues 43–58 (VKRKKKSEAARRRKYR) the composition is skewed to basic residues.

It belongs to the bacterial ribosomal protein bS21 family.

The polypeptide is Small ribosomal subunit protein bS21 (Symbiobacterium thermophilum (strain DSM 24528 / JCM 14929 / IAM 14863 / T)).